The chain runs to 594 residues: Homeobox protein prospero homolog 1 (594 aa).

2 stretches are compositionally biased toward polar residues: residues 1–13 (MSSG…ATAQ) and 36–50 (PPVN…SSNR). 3 disordered regions span residues 1 to 20 (MSSG…NGFS), 30 to 180 (IYYS…FQPQ), and 358 to 389 (DTSS…SASA). Residues 73–101 (STSVSSNSSSSSSTSNTNSTPSSSSTSSK) are compositionally biased toward low complexity. Residues 105–117 (EGMTETETMTASI) show a composition bias toward polar residues. The segment covering 118 to 135 (EQEKVIQNEESEAGKDGM) has biased composition (basic and acidic residues). Positions 136–162 (EEHDDGMNDFEIIDDTNDEVEESEERE) are enriched in acidic residues. Over residues 369-378 (KVEIKKEDAM) the composition is skewed to basic and acidic residues. A compositionally biased stretch (low complexity) spans 379–389 (SSRASPLSASA). One can recognise a Prospero-type homeo domain in the interval 435–493 (SSMLTPMHLRKAKLMFFYTRYPNSNLLKSYFPDIRFNKNNTAQLVKWFSNFREFYYNQM). Positions 435–593 (SSMLTPMHLR…KEPNFLERLE (159 aa)) are homeo-Prospero. Positions 494–593 (EKFARQALAE…KEPNFLERLE (100 aa)) constitute a Prospero domain.

It belongs to the Prospero homeodomain family.

The protein resides in the nucleus. Its function is as follows. Transcription factor involved in developmental processes. Controls the transcription of genes required for excretory canal formation. The polypeptide is Homeobox protein prospero homolog 1 (Caenorhabditis elegans).